The following is a 428-amino-acid chain: Aspartic protease 10 (428 aa).

Positions 1–16 are cleaved as a signal peptide; sequence MKTFIALLALLTVVSA. The Peptidase A1 domain maps to 72–425; it reads YMVQISLGSP…DMKSGRLGLA (354 aa). The active site involves D90. N155 and N191 each carry an N-linked (GlcNAc...) asparagine glycan. The active site involves D318. An intrachain disulfide couples C353 to C385.

The protein belongs to the peptidase A1 family. In terms of processing, proteolytically cleaved. Synthesized in the intestine. When secreted in low heme conditions, localizes to neurons near the anterior and posterior regions of the body and in coelomocytes.

The protein localises to the secreted. In terms of biological role, aspartic protease which plays a role in heme homeostasis and mediates inter-organ signaling between the intestine and extra-intestinal tissues when cellular heme levels are low. The protein is Aspartic protease 10 of Caenorhabditis elegans.